Consider the following 50-residue polypeptide: Omega-conotoxin Bu8 (50 aa).

A1 is a signal peptide. A propeptide spanning residues 2–24 (EDSRGTQLHRALRKATKLSESTR) is cleaved from the precursor. Disulfide bonds link C25-C40, C32-C44, and C39-C49. C49 carries the post-translational modification Cysteine amide.

It belongs to the conotoxin O1 superfamily. Expressed by the venom duct.

It localises to the secreted. Functionally, omega-conotoxins act at presynaptic membranes, they bind and block voltage-gated calcium channels (Cav). This toxin selectively and potently inhibits depolarization-activated rat Cav2.2/CACNA1B currents (IC(50)=89 nM), when coexpressed with alpha-2/delta-1 (CACNA2D1) and beta-3 (CACNB3) subunits. In vivo, is lethal to fish and displays potent analgesic activity in mice pain models of hot plate and acetic acid writhing but has fewer side effects on mouse motor function and lower toxicity in goldfish. Shows higher or similar analgesic activity in the pain models mentioned above compared to MVIIA, and lower side effects. In addition, it blocks Cav2.2/CACNA1B more rapidly than MVIIA and also dissociates more rapidly. This is Omega-conotoxin Bu8 from Conus bullatus (Bubble cone).